A 286-amino-acid polypeptide reads, in one-letter code: Shikimate dehydrogenase (NADP(+)) (286 aa).

Residues Ser19–Ser21 and Thr66 each bind shikimate. Lys70 serves as the catalytic Proton acceptor. Shikimate-binding residues include Asn91 and Asp107. NADP(+) is bound by residues Gly129–Ala133 and Leu229. Tyr231 lines the shikimate pocket. Position 252 (Gly252) interacts with NADP(+).

The protein belongs to the shikimate dehydrogenase family. As to quaternary structure, homodimer.

The enzyme catalyses shikimate + NADP(+) = 3-dehydroshikimate + NADPH + H(+). It functions in the pathway metabolic intermediate biosynthesis; chorismate biosynthesis; chorismate from D-erythrose 4-phosphate and phosphoenolpyruvate: step 4/7. In terms of biological role, involved in the biosynthesis of the chorismate, which leads to the biosynthesis of aromatic amino acids. Catalyzes the reversible NADPH linked reduction of 3-dehydroshikimate (DHSA) to yield shikimate (SA). This chain is Shikimate dehydrogenase (NADP(+)), found in Prochlorococcus marinus (strain AS9601).